Here is a 553-residue protein sequence, read N- to C-terminus: MDAEKRLFLKALKEKFEEDPREKYTKFYVFGGWRQSARKREFVEAAQKLIEKRGGIPFYNPDIGVPLGQRKLMPYKVSNTDAIVEGDDLHFMNNAAMQQFWDDIRRTVIVGMDTAHAVLEKRLGVEVTPETINEYMETINHALPGGAVVQEHMVEVHPALVWDCYAKIFTGDDELADEIDKRFLIDINKLFPEEQAEQIKKAIGKRTYQVSRVPTLVGRVCDGGTIARWSAMQIGMSFITAYKLCAGEAAIADFSYAAKHADVIQMASFLPARRARGPNEPGGIFFGVLADIVQTSRVSDDPVEQSLEVVAAGAMLYDQIWLGGYMSGGVGFTQYATATYTDDILDDFSYYGYDYITKKYGGCNSVKPTMDVVEDIATEVTLYGLEQYDTFPALLEDHFGGSQRAGVTAAAAGITTALATGNSNAGVNGWYLSQILHKEYHSRLGFYGYDLQDQCGAANSLSFRNDEGSPLELRGPNYPNYAMNVGHQGEYAGITQAAHSARGDAFALNPLIKVAFADPSLVFDFTHPRKEFARGALREFEPAGERDPIIPAH.

Position 150 (Q150) interacts with coenzyme F430. Residues R228, 259–260, and R273 each bind coenzyme B; that span reads KH. The residue at position 274 (R274) is a 5-methylarginine. Residues Y335 and Y447 each contribute to the coenzyme M site.

The protein belongs to the methyl-coenzyme M reductase alpha subunit family. As to quaternary structure, MCR is a hexamer of two alpha, two beta, and two gamma chains, forming a dimer of heterotrimers. Requires coenzyme F430 as cofactor. In terms of processing, is methylated on C5 of Arg-274 by the methyltransferase MJ0841. This post-translational methylation, despite being not essential in vivo, plays a role for the stability and structural integrity of MCR.

It is found in the cytoplasm. The enzyme catalyses coenzyme B + methyl-coenzyme M = methane + coenzyme M-coenzyme B heterodisulfide. It participates in one-carbon metabolism; methyl-coenzyme M reduction; methane from methyl-coenzyme M: step 1/1. In terms of biological role, component of the methyl-coenzyme M reductase (MCR) I that catalyzes the reductive cleavage of methyl-coenzyme M (CoM-S-CH3 or 2-(methylthio)ethanesulfonate) using coenzyme B (CoB or 7-mercaptoheptanoylthreonine phosphate) as reductant which results in the production of methane and the mixed heterodisulfide of CoB and CoM (CoM-S-S-CoB). This is the final step in methanogenesis. This chain is Methyl-coenzyme M reductase I subunit alpha (mcrA), found in Methanocaldococcus jannaschii (strain ATCC 43067 / DSM 2661 / JAL-1 / JCM 10045 / NBRC 100440) (Methanococcus jannaschii).